Reading from the N-terminus, the 310-residue chain is Oxygen-dependent coproporphyrinogen-III oxidase (310 aa).

Position 97 (serine 97) interacts with substrate. Residues histidine 101 and histidine 111 each contribute to the a divalent metal cation site. Histidine 111 acts as the Proton donor in catalysis. Substrate is bound at residue 113-115 (NFR). Positions 150 and 180 each coordinate a divalent metal cation. Residues 245-280 (YVEFNLLYDRGTRFGLEFGGRTESILMSLPPRVVWR) are important for dimerization. Position 263–265 (263–265 (GGR)) interacts with substrate.

This sequence belongs to the aerobic coproporphyrinogen-III oxidase family. Homodimer. Requires a divalent metal cation as cofactor.

Its subcellular location is the cytoplasm. It catalyses the reaction coproporphyrinogen III + O2 + 2 H(+) = protoporphyrinogen IX + 2 CO2 + 2 H2O. It participates in porphyrin-containing compound metabolism; protoporphyrin-IX biosynthesis; protoporphyrinogen-IX from coproporphyrinogen-III (O2 route): step 1/1. Its function is as follows. Involved in the heme biosynthesis. Catalyzes the aerobic oxidative decarboxylation of propionate groups of rings A and B of coproporphyrinogen-III to yield the vinyl groups in protoporphyrinogen-IX. In Coxiella burnetii (strain RSA 331 / Henzerling II), this protein is Oxygen-dependent coproporphyrinogen-III oxidase.